The chain runs to 278 residues: ATP-dependent dethiobiotin synthetase BioD 1 (278 aa).

51–56 (NVGKTI) contributes to the ATP binding site. Threonine 55 is a binding site for Mg(2+). Residue lysine 76 is part of the active site. Aspartate 102 is an ATP binding site. Residues aspartate 102 and glutamate 163 each contribute to the Mg(2+) site. Residues 223–224 (NR) and 252–254 (PYI) each bind ATP.

It belongs to the dethiobiotin synthetase family. As to quaternary structure, homodimer. Mg(2+) serves as cofactor.

It localises to the cytoplasm. The catalysed reaction is (7R,8S)-7,8-diammoniononanoate + CO2 + ATP = (4R,5S)-dethiobiotin + ADP + phosphate + 3 H(+). It participates in cofactor biosynthesis; biotin biosynthesis; biotin from 7,8-diaminononanoate: step 1/2. In terms of biological role, catalyzes a mechanistically unusual reaction, the ATP-dependent insertion of CO2 between the N7 and N8 nitrogen atoms of 7,8-diaminopelargonic acid (DAPA, also called 7,8-diammoniononanoate) to form a ureido ring. The chain is ATP-dependent dethiobiotin synthetase BioD 1 from Haemophilus ducreyi (strain 35000HP / ATCC 700724).